The chain runs to 605 residues: Ubiquitin carboxyl-terminal hydrolase 2 (605 aa).

Residues 1–200 (MSQLSSTLKR…CPEYLVDYLE (200 aa)) are necessary for interaction with MDM4. 2 disordered regions span residues 71–107 (LLDYDRGRPLLRPDITGGGKRAESQTRGTERPLGSGL) and 237–264 (WETGKGQAPGPSRSSSPGRDGMNSKSAQ). Basic and acidic residues predominate over residues 90–100 (KRAESQTRGTE). The span at 245–255 (PGPSRSSSPGR) shows a compositional bias: low complexity. In terms of domain architecture, USP spans 267-599 (AGLRNLGNTC…DAYLLFYELA (333 aa)). Catalysis depends on Cys276, which acts as the Nucleophile. The segment at 403 to 503 (YLEREDSRIG…FPKILVLHLK (101 aa)) is necessary for interaction with MDM4. Residues Cys425, Cys428, Cys476, and Cys479 each contribute to the Zn(2+) site. The Proton acceptor role is filled by His557.

Belongs to the peptidase C19 family. USP2 subfamily. In terms of assembly, homooligomer. Found in trimeric complex with MDM2 and MDM4 and USP2. Interacts with CCND1; the interaction is direct and promotes its stabilization by antagonizing ubiquitin-dependent degradation. Interacts (via N-terminus and C-terminus) with MDM2. Interacts with MDM4. Interacts with PER1. Interacts with KCNQ1; counteracts the NEDD4L-specific down-regulation of I(Ks) and restore plasma membrane localization of KCNQ1. Isoform 4: Interacts with NHERF4 and CLTC. Expressed in mesangial cells of the kidney and in different types of glomerulonephritides (at protein level).

It localises to the cytoplasm. The protein resides in the perinuclear region. It is found in the nucleus. The protein localises to the membrane. The catalysed reaction is Thiol-dependent hydrolysis of ester, thioester, amide, peptide and isopeptide bonds formed by the C-terminal Gly of ubiquitin (a 76-residue protein attached to proteins as an intracellular targeting signal).. Its activity is regulated as follows. Cleavage is inhibited by ubiquitin in a dosage-dependent manner. Cleavage is blocked by ubiquitin aldehyde. In terms of biological role, hydrolase that deubiquitinates polyubiquitinated target proteins such as MDM2, MDM4 and CCND1. Isoform 1 and isoform 4 possess both ubiquitin-specific peptidase and isopeptidase activities. Deubiquitinates MDM2 without reversing MDM2-mediated p53/TP53 ubiquitination and thus indirectly promotes p53/TP53 degradation and limits p53 activity. Has no deubiquitinase activity against p53/TP53. Prevents MDM2-mediated degradation of MDM4. Plays a role in the G1/S cell-cycle progression in normal and cancer cells. Regulates the circadian clock by modulating its intrinsic circadian rhythm and its capacity to respond to external cues. Associates with clock proteins and deubiquitinates core clock component PER1 but does not affect its overall stability. Regulates the nucleocytoplasmic shuttling and nuclear retention of PER1 and its repressive role on the clock transcription factors CLOCK and BMAL1. Plays a role in the regulation of myogenic differentiation of embryonic muscle cells. Functionally, circadian clock output effector that regulates Ca(2+) absorption in the small intestine. Probably functions by regulating protein levels of the membrane scaffold protein NHERF4 in a rhythmic manner, and is therefore likely to control Ca(2+) membrane permeability mediated by the Ca(2+) channel TRPV6 in the intestine. The polypeptide is Ubiquitin carboxyl-terminal hydrolase 2 (USP2) (Homo sapiens (Human)).